The sequence spans 90 residues: Large ribosomal subunit protein bL27 (90 aa).

The protein belongs to the bacterial ribosomal protein bL27 family.

The sequence is that of Large ribosomal subunit protein bL27 from Rhodopseudomonas palustris (strain BisB5).